A 202-amino-acid chain; its full sequence is LexA repressor (202 aa).

The segment at residues 28–48 (QQEIARAFGFRSLGTVRNYLV) is a DNA-binding region (H-T-H motif). Active-site for autocatalytic cleavage activity residues include Ser120 and Lys157.

The protein belongs to the peptidase S24 family. As to quaternary structure, homodimer.

The catalysed reaction is Hydrolysis of Ala-|-Gly bond in repressor LexA.. Represses a number of genes involved in the response to DNA damage (SOS response), including recA and lexA. In the presence of single-stranded DNA, RecA interacts with LexA causing an autocatalytic cleavage which disrupts the DNA-binding part of LexA, leading to derepression of the SOS regulon and eventually DNA repair. The polypeptide is LexA repressor (Syntrophotalea carbinolica (strain DSM 2380 / NBRC 103641 / GraBd1) (Pelobacter carbinolicus)).